A 139-amino-acid polypeptide reads, in one-letter code: Peptide methionine sulfoxide reductase MsrB (139 aa).

One can recognise a MsrB domain in the interval 8–130 (DREWQRELSP…NSASLQLKTQ (123 aa)). Cysteine 47, cysteine 50, cysteine 96, and cysteine 99 together coordinate Zn(2+). Catalysis depends on cysteine 119, which acts as the Nucleophile.

Belongs to the MsrB Met sulfoxide reductase family. It depends on Zn(2+) as a cofactor.

It catalyses the reaction L-methionyl-[protein] + [thioredoxin]-disulfide + H2O = L-methionyl-(R)-S-oxide-[protein] + [thioredoxin]-dithiol. This Acinetobacter baumannii (strain SDF) protein is Peptide methionine sulfoxide reductase MsrB.